The primary structure comprises 195 residues: HTH-type transcriptional regulator BetI (195 aa).

The HTH tetR-type domain maps to 8 to 68 (EIRRAQLIDA…ATMRHVLRDL (61 aa)). A DNA-binding region (H-T-H motif) is located at residues 31–50 (TLASVAQRASISTGIVSHYF).

The protein operates within amine and polyamine biosynthesis; betaine biosynthesis via choline pathway [regulation]. Functionally, repressor involved in the biosynthesis of the osmoprotectant glycine betaine. It represses transcription of the choline transporter BetT and the genes of BetAB involved in the synthesis of glycine betaine. The sequence is that of HTH-type transcriptional regulator BetI from Paraburkholderia phytofirmans (strain DSM 17436 / LMG 22146 / PsJN) (Burkholderia phytofirmans).